The sequence spans 154 residues: Myoglobin (154 aa).

The region spanning 2–148 is the Globin domain; sequence GLSDGEWQLV…FRNDIAAKYK (147 aa). S4 carries the post-translational modification Phosphoserine. Residue H65 coordinates nitrite. Residue H65 coordinates O2. The residue at position 68 (T68) is a Phosphothreonine. Heme b is bound at residue H94.

The protein belongs to the globin family. Monomeric.

The protein resides in the cytoplasm. Its subcellular location is the sarcoplasm. The catalysed reaction is Fe(III)-heme b-[protein] + nitric oxide + H2O = Fe(II)-heme b-[protein] + nitrite + 2 H(+). It carries out the reaction H2O2 + AH2 = A + 2 H2O. In terms of biological role, monomeric heme protein which primary function is to store oxygen and facilitate its diffusion within muscle tissues. Reversibly binds oxygen through a pentacoordinated heme iron and enables its timely and efficient release as needed during periods of heightened demand. Depending on the oxidative conditions of tissues and cells, and in addition to its ability to bind oxygen, it also has a nitrite reductase activity whereby it regulates the production of bioactive nitric oxide. Under stress conditions, like hypoxia and anoxia, it also protects cells against reactive oxygen species thanks to its pseudoperoxidase activity. The protein is Myoglobin (MB) of Proechimys guairae (Guaira spiny rat).